The sequence spans 157 residues: Cell number regulator 10 (157 aa).

A run of 2 helical transmembrane segments spans residues 41 to 57 (DCGL…ITFG) and 66 to 83 (GATS…LAYF).

It belongs to the cornifelin family. As to expression, expressed in roots, leaves, stalks, immature ears and silks.

The protein localises to the membrane. This chain is Cell number regulator 10 (CNR10), found in Zea mays (Maize).